The following is a 531-amino-acid chain: Phosphoinositide phospholipase C 9 (531 aa).

Residues 107-253 (RDMNAPLSHY…LQNKILISRR (147 aa)) enclose the PI-PLC X-box domain. The 121-residue stretch at 265-385 (ENGVELEIQE…GYVKKPNFLL (121 aa)) folds into the PI-PLC Y-box domain. Ser276 carries the phosphoserine modification. A C2 domain is found at 386–513 (NAGSSGVFYP…EGIRAVPLYD (128 aa)).

Requires Ca(2+) as cofactor. In terms of tissue distribution, expressed in leaves, roots, flowers and siliques.

The protein localises to the cell membrane. It catalyses the reaction a 1,2-diacyl-sn-glycero-3-phospho-(1D-myo-inositol-4,5-bisphosphate) + H2O = 1D-myo-inositol 1,4,5-trisphosphate + a 1,2-diacyl-sn-glycerol + H(+). The production of the second messenger molecules diacylglycerol (DAG) and inositol 1,4,5-trisphosphate (IP3) is mediated by activated phosphatidylinositol-specific phospholipase C enzymes. The protein is Phosphoinositide phospholipase C 9 (PLC9) of Arabidopsis thaliana (Mouse-ear cress).